The following is a 510-amino-acid chain: Propionyl-CoA carboxylase beta chain (510 aa).

The 257-residue stretch at 1-257 folds into the CoA carboxyltransferase N-terminal domain; the sequence is MKDILQELEN…SNRTPAPVRP (257 aa). The carboxyltransferase stretch occupies residues 1–504; it reads MKDILQELEN…NKKLANPWKK (504 aa). In terms of domain architecture, CoA carboxyltransferase C-terminal spans 264 to 504; that stretch reads RIEDSLDTLI…NKKLANPWKK (241 aa).

Belongs to the AccD/PCCB family. As to quaternary structure, probably a dodecamer composed of six biotin-containing alpha subunits and six beta subunits.

The catalysed reaction is propanoyl-CoA + hydrogencarbonate + ATP = (S)-methylmalonyl-CoA + ADP + phosphate + H(+). The protein operates within metabolic intermediate metabolism; propanoyl-CoA degradation; succinyl-CoA from propanoyl-CoA: step 1/3. The chain is Propionyl-CoA carboxylase beta chain from Cereibacter sphaeroides (strain ATCC 17023 / DSM 158 / JCM 6121 / CCUG 31486 / LMG 2827 / NBRC 12203 / NCIMB 8253 / ATH 2.4.1.) (Rhodobacter sphaeroides).